Reading from the N-terminus, the 511-residue chain is Putative CBL-interacting protein kinase 13 (511 aa).

A Protein kinase domain is found at 25 to 279 (FEVGKLLGQG…AEGIMENEWF (255 aa)). ATP contacts are provided by residues 31–39 (LGQGNFAKV) and lysine 54. Aspartate 147 serves as the catalytic Proton acceptor. The tract at residues 165-194 (DFGLSAVADGMRRDGLFHTFCGTPAYVAPE) is activation loop. Positions 307–340 (VDAPTSPPDTPRTVDSGDVGAAPTRPRKAGSLTS) are disordered. The region spanning 321–383 (DSGDVGAAPT…PGFDLSGLFD (63 aa)) is the NAF domain. Residues 400–429 (KHTARFVSAAPVEVIVATLEAAAAAAGMAV) are PPI.

Belongs to the protein kinase superfamily. CAMK Ser/Thr protein kinase family. SNF1 subfamily. It depends on Mn(2+) as a cofactor.

The catalysed reaction is L-seryl-[protein] + ATP = O-phospho-L-seryl-[protein] + ADP + H(+). It catalyses the reaction L-threonyl-[protein] + ATP = O-phospho-L-threonyl-[protein] + ADP + H(+). Its function is as follows. CIPK serine-threonine protein kinases interact with CBL proteins. Binding of a CBL protein to the regulatory NAF domain of CIPK protein lead to the activation of the kinase in a calcium-dependent manner. In Oryza sativa subsp. japonica (Rice), this protein is Putative CBL-interacting protein kinase 13 (CIPK13).